The primary structure comprises 199 residues: NAD(P)H dehydrogenase (quinone) (199 aa).

The region spanning 4 to 190 (ILVLYYSMYG…AIARFQGEHV (187 aa)) is the Flavodoxin-like domain. FMN contacts are provided by residues 10–15 (SMYGHI) and 79–81 (TRF). Tyrosine 12 provides a ligand contact to NAD(+). Tryptophan 99 is a binding site for substrate. FMN is bound by residues 114-119 (STGTGG) and histidine 134.

Belongs to the WrbA family. FMN serves as cofactor.

The catalysed reaction is a quinone + NADH + H(+) = a quinol + NAD(+). It catalyses the reaction a quinone + NADPH + H(+) = a quinol + NADP(+). The sequence is that of NAD(P)H dehydrogenase (quinone) from Yersinia pseudotuberculosis serotype O:1b (strain IP 31758).